We begin with the raw amino-acid sequence, 256 residues long: Trypsin CFT-1 (256 aa).

The first 17 residues, 1–17, serve as a signal peptide directing secretion; the sequence is MRVTLALVALCLASVAA. Residues 18 to 24 constitute a propeptide, activation peptide; sequence LPEKQQR. The Peptidase S1 domain maps to 25 to 256; it reads IVGGSVTTIE…RFTAWIQANA (232 aa). A disulfide bridge connects residues cysteine 55 and cysteine 71. Active-site charge relay system residues include histidine 70 and aspartate 115. Cystine bridges form between cysteine 180–cysteine 197 and cysteine 209–cysteine 233. Serine 213 serves as the catalytic Charge relay system.

The protein belongs to the peptidase S1 family.

Its subcellular location is the secreted. The protein localises to the extracellular space. The catalysed reaction is Preferential cleavage: Arg-|-Xaa, Lys-|-Xaa.. Its function is as follows. Responsible for the activation of delta-endotoxin from Bacillus thuringiensis. The protein is Trypsin CFT-1 of Choristoneura fumiferana (Spruce budworm moth).